A 62-amino-acid chain; its full sequence is Small EDRK-rich factor 1 (62 aa).

2 stretches are compositionally biased toward basic and acidic residues: residues Met1–Ser30 and Ile50–Lys62. Positions Met1–Lys62 are disordered.

Belongs to the SERF family. In terms of assembly, interacts with SNCA; this interaction promotes the aggregation of SNCA. Expressed in brain (at protein level). Highly expressed in the testis.

It is found in the cytoplasm. Its subcellular location is the cytosol. It localises to the nucleus. Functionally, positive regulator of amyloid protein aggregation and proteotoxicity. Induces conformational changes in amyloid proteins, such as APP, HTT, and SNCA, driving them into compact formations preceding the formation of aggregates. This Mus musculus (Mouse) protein is Small EDRK-rich factor 1 (Serf1).